A 309-amino-acid chain; its full sequence is Homoserine O-succinyltransferase (309 aa).

C142 serves as the catalytic Acyl-thioester intermediate. K163 and S192 together coordinate substrate. H235 (proton acceptor) is an active-site residue. Residue E237 is part of the active site. R249 contacts substrate.

The protein belongs to the MetA family. In terms of assembly, homodimer.

The protein localises to the cytoplasm. The catalysed reaction is L-homoserine + succinyl-CoA = O-succinyl-L-homoserine + CoA. It functions in the pathway amino-acid biosynthesis; L-methionine biosynthesis via de novo pathway; O-succinyl-L-homoserine from L-homoserine: step 1/1. Transfers a succinyl group from succinyl-CoA to L-homoserine, forming succinyl-L-homoserine. This is Homoserine O-succinyltransferase from Escherichia coli O157:H7.